Here is a 137-residue protein sequence, read N- to C-terminus: Nucleoside diphosphate kinase (137 aa).

ATP-binding residues include Lys10, Phe58, Arg86, Thr92, Arg103, and Asn113. The active-site Pros-phosphohistidine intermediate is the His116.

Belongs to the NDK family. In terms of assembly, homotetramer. Mg(2+) serves as cofactor.

The protein resides in the cytoplasm. The catalysed reaction is a 2'-deoxyribonucleoside 5'-diphosphate + ATP = a 2'-deoxyribonucleoside 5'-triphosphate + ADP. It carries out the reaction a ribonucleoside 5'-diphosphate + ATP = a ribonucleoside 5'-triphosphate + ADP. Functionally, major role in the synthesis of nucleoside triphosphates other than ATP. The ATP gamma phosphate is transferred to the NDP beta phosphate via a ping-pong mechanism, using a phosphorylated active-site intermediate. This is Nucleoside diphosphate kinase from Helicobacter pylori (strain ATCC 700392 / 26695) (Campylobacter pylori).